The primary structure comprises 863 residues: Desmocollin-2 (863 aa).

Residues 1-89 (KFIGRVNLKE…QEKVLRRAKR (89 aa)) constitute a propeptide that is removed on maturation. Cadherin domains lie at 90 to 197 (RWAP…APIF), 198 to 309 (TETS…LPTF), 310 to 423 (TRSS…GPEC), 424 to 528 (DPRV…VIPQ), and 529 to 644 (RTVV…ILGK). At 90–644 (RWAPIPCSVP…TGNREVILGK (555 aa)) the chain is on the extracellular side. Residue Asn-120 is glycosylated (N-linked (GlcNAc...) asparagine). 3 N-linked (GlcNAc...) asparagine glycosylation sites follow: Asn-346, Asn-495, and Asn-579. The helical transmembrane segment at 645-665 (WAILAILLGIALLFCILFTLV) threads the bilayer. Topologically, residues 666–863 (CGATTGADKK…RTLAETCMKR (198 aa)) are cytoplasmic. Phosphoserine is present on residues Ser-826, Ser-830, and Ser-835.

In terms of assembly, interacts with DSP, PKP2 and JUP. Interacts with DSG3; the interaction may limit the interaction of DSC3 with p38MAPK family members and therefore repress p38MAPK signaling activation. In terms of tissue distribution, expressed in esophagus and rumen. Weakly expressed in epithelia and cardiac muscle.

It is found in the cell membrane. The protein resides in the cell junction. It localises to the desmosome. A component of desmosome cell-cell junctions which are required for positive regulation of cellular adhesion. Promotes timely incorporation of DSG2 into desmosome intercellular junctions and promotes interaction of desmosome cell junctions with intermediate filament cytokeratin, via modulation of DSP phosphorylation. Plays an important role in desmosome-mediated maintenance of intestinal epithelial cell intercellular adhesion strength and barrier function. Positively regulates wound healing of intestinal mucosa via promotion of epithelial cell migration, and also plays a role in mechanotransduction of force between intestinal epithelial cells and extracellular matrix. May contribute to epidermal cell positioning (stratification) by mediating differential adhesiveness between cells that express different isoforms. In Bos taurus (Bovine), this protein is Desmocollin-2 (DSC2).